A 164-amino-acid chain; its full sequence is Crossover junction endodeoxyribonuclease RuvC (164 aa).

Catalysis depends on residues Asp7, Glu66, and Asp138. The Mg(2+) site is built by Asp7, Glu66, and Asp138.

This sequence belongs to the RuvC family. As to quaternary structure, homodimer which binds Holliday junction (HJ) DNA. The HJ becomes 2-fold symmetrical on binding to RuvC with unstacked arms; it has a different conformation from HJ DNA in complex with RuvA. In the full resolvosome a probable DNA-RuvA(4)-RuvB(12)-RuvC(2) complex forms which resolves the HJ. Mg(2+) serves as cofactor.

The protein resides in the cytoplasm. It carries out the reaction Endonucleolytic cleavage at a junction such as a reciprocal single-stranded crossover between two homologous DNA duplexes (Holliday junction).. The RuvA-RuvB-RuvC complex processes Holliday junction (HJ) DNA during genetic recombination and DNA repair. Endonuclease that resolves HJ intermediates. Cleaves cruciform DNA by making single-stranded nicks across the HJ at symmetrical positions within the homologous arms, yielding a 5'-phosphate and a 3'-hydroxyl group; requires a central core of homology in the junction. The consensus cleavage sequence is 5'-(A/T)TT(C/G)-3'. Cleavage occurs on the 3'-side of the TT dinucleotide at the point of strand exchange. HJ branch migration catalyzed by RuvA-RuvB allows RuvC to scan DNA until it finds its consensus sequence, where it cleaves and resolves the cruciform DNA. This Paracoccus denitrificans (strain Pd 1222) protein is Crossover junction endodeoxyribonuclease RuvC.